The primary structure comprises 332 residues: RNA polymerase principal sigma factor HrdD (332 aa).

Residues 1 to 11 (MATRAVARRKS) are compositionally biased toward basic residues. The tract at residues 1–25 (MATRAVARRKSAAGETSGSATSVRA) is disordered. Over residues 13 to 22 (AGETSGSATS) the composition is skewed to low complexity. Residues 124–137 (DLIQEGNAGLVRAV) carry the Polymerase core binding motif. Positions 294 to 313 (LTEVGKEHGLTRERIRQIEK) form a DNA-binding region, H-T-H motif.

Belongs to the sigma-70 factor family. Interacts transiently with the RNA polymerase catalytic core.

Its function is as follows. Sigma factors are initiation factors that promote the attachment of RNA polymerase to specific initiation sites and are then released. This chain is RNA polymerase principal sigma factor HrdD (hrdD), found in Streptomyces coelicolor (strain ATCC BAA-471 / A3(2) / M145).